Reading from the N-terminus, the 428-residue chain is GTPase Obg (428 aa).

The Obg domain occupies Met1–Leu158. An OBG-type G domain is found at Ala159–Glu329. Residues Gly165 to Ser172, Phe190 to Val194, Asp212 to Gly215, Asn282 to Asp285, and Ser310 to Val312 contribute to the GTP site. Positions 172 and 192 each coordinate Mg(2+). Residues Lys350–Asp428 enclose the OCT domain.

It belongs to the TRAFAC class OBG-HflX-like GTPase superfamily. OBG GTPase family. Monomer. Mg(2+) is required as a cofactor.

The protein localises to the cytoplasm. In terms of biological role, an essential GTPase which binds GTP, GDP and possibly (p)ppGpp with moderate affinity, with high nucleotide exchange rates and a fairly low GTP hydrolysis rate. Plays a role in control of the cell cycle, stress response, ribosome biogenesis and in those bacteria that undergo differentiation, in morphogenesis control. The polypeptide is GTPase Obg (Bacillus cereus (strain B4264)).